The sequence spans 55 residues: Large ribosomal subunit protein bL33A (55 aa).

Belongs to the bacterial ribosomal protein bL33 family.

This Mycobacterium ulcerans (strain Agy99) protein is Large ribosomal subunit protein bL33A.